A 115-amino-acid polypeptide reads, in one-letter code: Macrophage migration inhibitory factor homolog (115 aa).

Catalysis depends on proline 2, which acts as the Proton acceptor; via imino nitrogen. Substrate is bound by residues lysine 33 and isoleucine 65.

Belongs to the MIF family.

Its subcellular location is the secreted. It carries out the reaction L-dopachrome = 5,6-dihydroxyindole-2-carboxylate. The catalysed reaction is 3-phenylpyruvate = enol-phenylpyruvate. Functionally, tautomerization of the methyl ester of L-dopachrome. Inhibits migration of human peripheral blood mononuclear cells. The sequence is that of Macrophage migration inhibitory factor homolog from Brugia malayi (Filarial nematode worm).